Reading from the N-terminus, the 294-residue chain is MAHGIPSQGKVTITVDEYSSNPTQAFTHYNINQSRFQPPHVHMVDPIPYDTPKPAGHTRFVCISDTHSRTDGIQMPYGDILLHTGDFTELGLPSEVKKFNDWLGNLPYEYKIVIAGNHELTFDKEFMADLVKQDYYRFPSVSKLKPEDFDNVQSLLTNSIYLQDSEVTVKGFRIYGAPWTPWFNGWGFNLPRGQSLLDKWNLIPEGTDILMTHGPPLGFRDWVPKELQRVGCVELLNTVQRRVRPKLHVFGGIHEGYGTMTDGYTTYINASTCTVSFQPTNPPIIFDLPNPQGS.

Residues aspartate 65, histidine 67, aspartate 86, asparagine 117, and histidine 213 each contribute to the Mn(2+) site. Residue 117–118 (NH) coordinates GMP. GMP contacts are provided by residues 225 to 226 (KE) and 254 to 255 (HE). Histidine 254 provides a ligand contact to Mn(2+).

The protein belongs to the UPF0046 family. In terms of assembly, homodimer. Mn(2+) serves as cofactor. It depends on Co(2+) as a cofactor. In terms of tissue distribution, expressed in fetal brain (at protein level). detected in fetal and adult brain.

With respect to regulation, inhibited by nmolar levels of AMP and GMP. Displays low metallophosphoesterase activity (in vitro). May play a role in the development of the nervous system. The chain is Metallophosphoesterase MPPED2 (Mpped2) from Rattus norvegicus (Rat).